The following is a 666-amino-acid chain: Polyamine deacetylase HDAC10 (666 aa).

The interval 1 to 323 (MGTALVYHED…VCMMVQTLLG (323 aa)) is histone deacetylase. His-135 is a catalytic residue.

It belongs to the histone deacetylase family. HD type 2 subfamily. Interacts with HDAC3. Interacts with HDAC2 and NCOR2/SMRT. Interacts with HSPA8/HSC70. Interacts with MSH2. Widely expressed.

The protein localises to the cytoplasm. The protein resides in the nucleus. It catalyses the reaction N(8)-acetylspermidine + H2O = spermidine + acetate. It carries out the reaction N-acetylputrescine + H2O = putrescine + acetate. The enzyme catalyses N-acetylcadaverine + H2O = cadaverine + acetate. The catalysed reaction is N(6)-acetyl-L-lysyl-[protein] + H2O = L-lysyl-[protein] + acetate. In terms of biological role, polyamine deacetylase (PDAC), which acts preferentially on N(8)-acetylspermidine, and also on acetylcadaverine and acetylputrescine. Exhibits attenuated catalytic activity toward N(1),N(8)-diacetylspermidine and very low activity, if any, toward N(1)-acetylspermidine. Histone deacetylase activity has been observed in vitro. Has also been shown to be involved in MSH2 deacetylation. The physiological relevance of protein/histone deacetylase activity is unclear and could be very weak. May play a role in the promotion of late stages of autophagy, possibly autophagosome-lysosome fusion and/or lysosomal exocytosis in neuroblastoma cells. May play a role in homologous recombination. May promote DNA mismatch repair. This is Polyamine deacetylase HDAC10 (Hdac10) from Mus musculus (Mouse).